We begin with the raw amino-acid sequence, 548 residues long: MTGQPLLGDLLTLASDALPEVEALFETARSALKERVTTDGKVSSKALEEEQFAAHALSWLATYVESLRQMRAWAGRLETEGRFGEMEALILQIAFGEYLAQIRGGIPMSQTETARVQDIGIELGHPGEAVRRLIQAGNTPAARARLVALMRDNHGRATFGASGLDEELEMIRDQFRRFADERVAPHAHGWHMRDELIPMEIVEALAEMGVFGLTIPEEFGGFGLSKASMVVVSEELSRGYIGVGSLGTRSEIAAELILCGGTDAQKAAWLPKLASGEILPTAVFTEPNTGSDLGSLRTRAVKDGDEWVVHGNKTWITHAARTHVMTLLARTDLETTDYRGLSMFLAEKVPGTDADPFPTPGMTGGEIEVLGYRGMKEYEIGFDGFRVKAENLLGGVEGQGFKQLMQTFESARIQTAARAIGVAQNALEVGMQYAEERKQFGKALIEFPRVAGKLAMMAVEIMVARQLTYHSAWEKDHGQRCDLEAGMAKLLGARVAWAAADNALQIHGGNGFALEYQISRILCDARILNIFEGAAEIQAQVIARRLLD.

FAD-binding positions include 282 to 291 (AVFTEPNTGS) and 315 to 317 (WIT). Residue S291 coordinates substrate. Residue 409–412 (ESAR) participates in substrate binding. Residues R437 and 505–509 (QIHGG) each bind FAD. E532 acts as the Proton acceptor in catalysis. An FAD-binding site is contributed by 534 to 536 (AAE).

This sequence belongs to the acyl-CoA dehydrogenase family. In terms of assembly, homodimer. The cofactor is FAD.

It carries out the reaction (2S)-methylsuccinyl-CoA + oxidized [electron-transfer flavoprotein] + H(+) = 2-methylfumaryl-CoA + reduced [electron-transfer flavoprotein]. In terms of biological role, involved in the ethylmalonyl-CoA pathway, a new acetyl-CoA assimilation strategy that operates in a number of bacteria and replaces the glyoxylate cycle. Catalyzes the oxidation of (2S)-methylsuccinyl-CoA to yield mesaconyl-(C1)-CoA. Highly specific for (S)-methylsuccinyl-CoA. This is (2S)-methylsuccinyl-CoA dehydrogenase from Cereibacter sphaeroides (Rhodobacter sphaeroides).